Here is a 252-residue protein sequence, read N- to C-terminus: Hydroxyacylglutathione hydrolase (252 aa).

Zn(2+) is bound by residues His-54, His-56, Asp-58, His-59, His-111, Asp-128, and His-166.

Belongs to the metallo-beta-lactamase superfamily. Glyoxalase II family. As to quaternary structure, monomer. Zn(2+) serves as cofactor.

It carries out the reaction an S-(2-hydroxyacyl)glutathione + H2O = a 2-hydroxy carboxylate + glutathione + H(+). It participates in secondary metabolite metabolism; methylglyoxal degradation; (R)-lactate from methylglyoxal: step 2/2. Its function is as follows. Thiolesterase that catalyzes the hydrolysis of S-D-lactoyl-glutathione to form glutathione and D-lactic acid. This Aliivibrio fischeri (strain ATCC 700601 / ES114) (Vibrio fischeri) protein is Hydroxyacylglutathione hydrolase.